The chain runs to 79 residues: Sulfur carrier protein TusA (79 aa).

Residue Cys17 is the Cysteine persulfide intermediate of the active site.

This sequence belongs to the sulfur carrier protein TusA family.

It is found in the cytoplasm. In terms of biological role, sulfur carrier protein which probably makes part of a sulfur-relay system. The chain is Sulfur carrier protein TusA from Haemophilus influenzae (strain ATCC 51907 / DSM 11121 / KW20 / Rd).